We begin with the raw amino-acid sequence, 953 residues long: Zinc finger protein 507 (953 aa).

Ser95 carries the phosphoserine modification. 3 consecutive C2H2-type zinc fingers follow at residues 125 to 147, 155 to 185, and 248 to 270; these read YQCS…IKQH, LMCS…ANIH, and YRCL…AWKH. Position 427 is a phosphoserine (Ser427). The disordered stretch occupies residues 470–489; it reads KGLATDENAPPGRRRTNSES. C2H2-type zinc fingers lie at residues 641 to 663, 669 to 691, 697 to 720, 758 to 780, and 786 to 808; these read YRCR…LRVH, YQCP…MIHH, YQCK…REQH, YRCD…RRIH, and YRCS…MWKH. A disordered region spans residues 831–891; it reads GRVLGKTPGK…KLSPTSNTSY (61 aa). Over residues 854–891 the composition is skewed to polar residues; that stretch reads TGSSENAVSSSELMSQTPSEVLGTNENEKLSPTSNTSY. The C2H2-type 9 zinc-finger motif lies at 911 to 933; it reads FCCCICGFESTSKENLLDHMKEH.

This sequence belongs to the krueppel C2H2-type zinc-finger protein family.

The protein localises to the nucleus. Its function is as follows. May be involved in transcriptional regulation. The polypeptide is Zinc finger protein 507 (ZNF507) (Pongo abelii (Sumatran orangutan)).